Reading from the N-terminus, the 65-residue chain is Large ribosomal subunit protein bL35 (65 aa).

Residues 1–22 are disordered; sequence MPKIKTVRGAAKRFKKTGKGGF. Basic residues predominate over residues 10 to 22; it reads AAKRFKKTGKGGF.

The protein belongs to the bacterial ribosomal protein bL35 family.

This chain is Large ribosomal subunit protein bL35, found in Klebsiella pneumoniae (strain 342).